A 1356-amino-acid chain; its full sequence is MKVTVCFGRTRVVVPCGDGHMKVFSLIQQAVTRYRKAIAKDPNYWIQVHRLEHGDGGILDLDDILCDVADDKDRLVAVFDEQDPHHGGDGTSASSTGTQSPEIFGSELGTNNVSAFQPYQATSEIEVTPSVLRANMPLHVRRSSDPALIGLSTSVSDSNFSSEEPSRKNPTRWSTTAGFLKQNTAGSPKTCDRKKDENYRSLPRDTSNWSNQFQRDNARSSLSASHPMVGKWLEKQEQDEDGTEEDNSRVEPVGHADTGLEHIPNFSLDDMVKLVEVPNDGGPLGIHVVPFSARGGRTLGLLVKRLEKGGKAEHENLFRENDCIVRINDGDLRNRRFEQAQHMFRQAMRTPIIWFHVVPAANKEQYEQLSQSEKNNYYSSRFSPDSQYIDNRSVNSAGLHTVQRAPRLNHPPEQIDSHSRLPHSAHPSGKPPSAPASAPQNVFSTTVSSGYNTKKIGKRLNIQLKKGTEGLGFSITSRDVTIGGSAPIYVKNILPRGAAIQDGRLKAGDRLIEVNGVDLVGKSQEEVVSLLRSTKMEGTVSLLVFRQEDAFHPRELNAEPSQMQIPKETKAEDEDIVLTPDGTREFLTFEVPLNDSGSAGLGVSVKGNRSKENHADLGIFVKSIINGGAASKDGRLRVNDQLIAVNGESLLGKTNQDAMETLRRSMSTEGNKRGMIQLIVARRISKCNELKSPGSPPGPELPIETALDDRERRISHSLYSGIEGLDESPSRNAALSRIMGESGKYQLSPTVNMPQDDTVIIEDDRLPVLPPHLSDQSSSSSHDDVGFVTADAGTWAKAAISDSADCSLSPDVDPVLAFQREGFGRQSMSEKRTKQFSDASQLDFVKTRKSKSMDLGIADETKLNTVDDQKAGSPSRDVGPSLGLKKSSSLESLQTAVAEVTLNGDIPFHRPRPRIIRGRGCNESFRAAIDKSYDKPAVDDDDEGMETLEEDTEESSRSGRESVSTASDQPSHSLERQMNGNQEKGDKTDRKKDKTGKEKKKDRDKEKDKMKAKKGMLKGLGDMFRFGKHRKDDKIEKTGKIKIQESFTSEEERIRMKQEQERIQAKTREFRERQARERDYAEIQDFHRTFGCDDELMYGGVSSYEGSMALNARPQSPREGHMMDALYAQVKKPRNSKPSPVDSNRSTPSNHDRIQRLRQEFQQAKQDEDVEDRRRTYSFEQPWPNARPATQSGRHSVSVEVQMQRQRQEERESSQQAQRQYSSLPRQSRKNASSVSQDSWEQNYSPGEGFQSAKENPRYSSYQGSRNGYLGGHGFNARVMLETQELLRQEQRRKEQQMKKQPPSEGPSNYDSYKKVQDPSYAPPKGPFRQDVPPSPSQVARLNRLQTPEKGRPFYS.

The residue at position 25 (Ser-25) is a Phosphoserine. Disordered regions lie at residues 81 to 100 (EQDP…GTQS) and 154 to 262 (SVSD…GLEH). At Thr-91 the chain carries Phosphothreonine. The segment covering 91–100 (TSASSTGTQS) has biased composition (low complexity). Polar residues-rich tracts occupy residues 154–163 (SVSDSNFSSE) and 171–187 (TRWS…TAGS). Phosphoserine is present on residues Ser-156 and Ser-174. A compositionally biased stretch (basic and acidic residues) spans 190-203 (TCDRKKDENYRSLP). A compositionally biased stretch (polar residues) spans 204 to 224 (RDTSNWSNQFQRDNARSSLSA). Residues 246–260 (DNSRVEPVGHADTGL) are compositionally biased toward basic and acidic residues. The 89-residue stretch at 271–359 (MVKLVEVPND…TPIIWFHVVP (89 aa)) folds into the PDZ 1 domain. At Ser-383 the chain carries Phosphoserine. Positions 408-448 (LNHPPEQIDSHSRLPHSAHPSGKPPSAPASAPQNVFSTTVS) are disordered. PDZ domains follow at residues 461-546 (NIQL…LVFR) and 590-677 (EVPL…GMIQ). Tyr-489 is modified (phosphotyrosine). Phosphoserine is present on residues Ser-692, Ser-695, Ser-715, Ser-728, Ala-792, Ser-809, and Ser-827. Residues 712–936 (RRISHSLYSG…AAIDKSYDKP (225 aa)) form an interaction with PRKCI and PRKCZ region. N6-acetyllysine is present on Lys-834. The residue at position 837 (Ser-837) is a Phosphoserine. Lys-851 is subject to N6-acetyllysine. Ser-852 and Ser-873 each carry phosphoserine. 2 disordered regions span residues 865-886 (TVDD…GLKK) and 932-1025 (SYDK…DMFR). Lys-885 is subject to N6-acetyllysine. An interaction with FRMD4A region spans residues 935–1356 (KPAVDDDDEG…TPEKGRPFYS (422 aa)). Acidic residues predominate over residues 939–953 (DDDDEGMETLEEDTE). Ser-962 carries the phosphoserine; by AURKA modification. The segment covering 968–982 (DQPSHSLERQMNGNQ) has biased composition (polar residues). Residues Ser-971 and Ser-973 each carry the phosphoserine modification. Basic and acidic residues predominate over residues 983 to 1009 (EKGDKTDRKKDKTGKEKKKDRDKEKDK). Ser-1046 bears the Phosphoserine mark. Positions 1049 to 1077 (SEEERIRMKQEQERIQAKTREFRERQARE) form a coiled coil. The segment at 1129 to 1356 (QVKKPRNSKP…TPEKGRPFYS (228 aa)) is disordered. The span at 1136-1149 (SKPSPVDSNRSTPS) shows a compositional bias: polar residues. Over residues 1150 to 1177 (NHDRIQRLRQEFQQAKQDEDVEDRRRTY) the composition is skewed to basic and acidic residues. 3 coiled-coil regions span residues 1151–1174 (HDRI…EDRR), 1201–1224 (VQMQ…YSSL), and 1280–1301 (MLET…MKKQ). Residues 1196–1205 (SVSVEVQMQR) are compositionally biased toward low complexity. Polar residues predominate over residues 1221 to 1245 (YSSLPRQSRKNASSVSQDSWEQNYS). Over residues 1285–1298 (ELLRQEQRRKEQQM) the composition is skewed to basic and acidic residues. A compositionally biased stretch (polar residues) spans 1337 to 1346 (SQVARLNRLQ). Residues 1347–1356 (TPEKGRPFYS) are compositionally biased toward basic and acidic residues. Lys-1350 bears the N6-acetyllysine mark.

Belongs to the PAR3 family. In terms of assembly, interacts (via PDZ 1 domain) with F11R/JAM1, PARD6A and PARD6B. Interacts with PRCKI and CDH5. Interacts (via PDZ 3 domain) with PTEN (via C-terminus). Part of a complex with PARD6A or PARD6B, PRKCI or PRKCZ and CDC42 or RAC1. Component of a complex whose core is composed of ARHGAP17, AMOT, PALS1, PATJ and PARD3/PAR3. Interacts with LIMK2, AURKA and AURKB. Component of the Par polarity complex, composed of at least phosphorylated PRKCZ, PARD3 and TIAM1. Directly interacts with TIAM1 and TIAM2. Interacts with ECT2, FBF1 and SIRT2. Interacts (via coiled-coil domain) with FRMD4A. Found in a complex with PARD3, CYTH1 and FRMD4A. Interacts with SAPCD2. Interacts with PRKCA. Interacts with PRKCZ. In terms of processing, acetylated. Deacetylated by SIRT2, thereby inhibiting Schwann cell peripheral myelination. Phosphorylation at Ser-827 by PRKCZ and PRKCI occurs at the most apical tip of epithelial cell-cell contacts during the initial phase of tight junction formation and may promote dissociation of the complex with PARD6. EGF-induced Tyr-1127 phosphorylation mediates dissociation from LIMK2. Phosphorylation by AURKA at Ser-962 is required for the normal establishment of neuronal polarity. Widely expressed.

The protein resides in the cytoplasm. It localises to the endomembrane system. Its subcellular location is the cell junction. It is found in the tight junction. The protein localises to the adherens junction. The protein resides in the cell membrane. It localises to the cell cortex. Its subcellular location is the cytoskeleton. Functionally, adapter protein involved in asymmetrical cell division and cell polarization processes. Seems to play a central role in the formation of epithelial tight junctions. Targets the phosphatase PTEN to cell junctions. Involved in Schwann cell peripheral myelination. Association with PARD6B may prevent the interaction of PARD3 with F11R/JAM1, thereby preventing tight junction assembly. The PARD6-PARD3 complex links GTP-bound Rho small GTPases to atypical protein kinase C proteins. Required for establishment of neuronal polarity and normal axon formation in cultured hippocampal neurons. This Homo sapiens (Human) protein is Partitioning defective 3 homolog.